The sequence spans 455 residues: Keratin, type I cuticular Ha5 (455 aa).

Positions M1–E97 are head. The IF rod domain occupies E97–L408. The segment at K98–W132 is coil 1A. The linker 1 stretch occupies residues C133–D143. Residues Y144–C244 form a coil 1B region. The tract at residues Q245–V260 is linker 12. The tract at residues D261 to E404 is coil 2. Positions D405–F455 are tail.

This sequence belongs to the intermediate filament family. Early expression in the hair follicle, mainly found in supramatricial cells and lowermost cortical cells of the hair bulb.

This Homo sapiens (Human) protein is Keratin, type I cuticular Ha5 (KRT35).